Consider the following 104-residue polypeptide: Iron-sulfur cluster assembly protein CyaY (104 aa).

This sequence belongs to the frataxin family.

Involved in iron-sulfur (Fe-S) cluster assembly. May act as a regulator of Fe-S biogenesis. In Vibrio campbellii (strain ATCC BAA-1116), this protein is Iron-sulfur cluster assembly protein CyaY.